Here is a 207-residue protein sequence, read N- to C-terminus: Crossover junction endodeoxyribonuclease RuvC (207 aa).

Catalysis depends on residues aspartate 11, glutamate 71, and aspartate 143. Residues aspartate 11, glutamate 71, and aspartate 143 each coordinate Mg(2+).

It belongs to the RuvC family. As to quaternary structure, homodimer which binds Holliday junction (HJ) DNA. The HJ becomes 2-fold symmetrical on binding to RuvC with unstacked arms; it has a different conformation from HJ DNA in complex with RuvA. In the full resolvosome a probable DNA-RuvA(4)-RuvB(12)-RuvC(2) complex forms which resolves the HJ. Mg(2+) is required as a cofactor.

The protein resides in the cytoplasm. It catalyses the reaction Endonucleolytic cleavage at a junction such as a reciprocal single-stranded crossover between two homologous DNA duplexes (Holliday junction).. Functionally, the RuvA-RuvB-RuvC complex processes Holliday junction (HJ) DNA during genetic recombination and DNA repair. Endonuclease that resolves HJ intermediates. Cleaves cruciform DNA by making single-stranded nicks across the HJ at symmetrical positions within the homologous arms, yielding a 5'-phosphate and a 3'-hydroxyl group; requires a central core of homology in the junction. The consensus cleavage sequence is 5'-(A/T)TT(C/G)-3'. Cleavage occurs on the 3'-side of the TT dinucleotide at the point of strand exchange. HJ branch migration catalyzed by RuvA-RuvB allows RuvC to scan DNA until it finds its consensus sequence, where it cleaves and resolves the cruciform DNA. This chain is Crossover junction endodeoxyribonuclease RuvC, found in Methylobacterium radiotolerans (strain ATCC 27329 / DSM 1819 / JCM 2831 / NBRC 15690 / NCIMB 10815 / 0-1).